The primary structure comprises 77 residues: DNA-directed RNA polymerase subunit Rpo5 (77 aa).

Belongs to the archaeal Rpo5/eukaryotic RPB5 RNA polymerase subunit family. Part of the RNA polymerase complex.

It localises to the cytoplasm. It carries out the reaction RNA(n) + a ribonucleoside 5'-triphosphate = RNA(n+1) + diphosphate. In terms of biological role, DNA-dependent RNA polymerase (RNAP) catalyzes the transcription of DNA into RNA using the four ribonucleoside triphosphates as substrates. In Methanosphaera stadtmanae (strain ATCC 43021 / DSM 3091 / JCM 11832 / MCB-3), this protein is DNA-directed RNA polymerase subunit Rpo5.